Consider the following 542-residue polypeptide: Nuclear hormone receptor family member nhr-35 (542 aa).

A DNA-binding region (nuclear receptor) is located at residues 74-149; sequence NSICHICSDV…SGMRDDQVQS (76 aa). 2 NR C4-type zinc fingers span residues 77-97 and 113-137; these read CHIC…CNGC and CRFE…FMKC. Positions 186-438 constitute an NR LBD domain; it reads EYDQLLESLL…VLMEELILAE (253 aa). The interval 445 to 487 is disordered; that stretch reads RQDQTPCSIMNDTPSGSQDMCSPCPEDLLRTSTSSNSPTNSSL. Over residues 448–464 the composition is skewed to polar residues; that stretch reads QTPCSIMNDTPSGSQDM. The span at 475–487 shows a compositional bias: low complexity; the sequence is TSTSSNSPTNSSL.

Belongs to the nuclear hormone receptor family.

The protein resides in the nucleus. In terms of biological role, orphan nuclear receptor. The protein is Nuclear hormone receptor family member nhr-35 (nhr-35) of Caenorhabditis elegans.